The sequence spans 267 residues: Probable beta-lactamase YbxI (267 aa).

Positions 1-23 are cleaved as a signal peptide; that stretch reads MKKWIYVVLVLSIAGIGGFSVHA. The active-site Acyl-ester intermediate is the serine 76. Lysine 79 carries the N6-carboxylysine modification. 214–216 lines the substrate pocket; sequence KTG.

The protein belongs to the class-D beta-lactamase family.

The enzyme catalyses a beta-lactam + H2O = a substituted beta-amino acid. In Bacillus subtilis (strain 168), this protein is Probable beta-lactamase YbxI (ybxI).